A 368-amino-acid polypeptide reads, in one-letter code: Quinolinate synthase (368 aa).

2 residues coordinate iminosuccinate: His46 and Ser63. [4Fe-4S] cluster is bound at residue Cys110. Residues 141-143 and Ser162 contribute to the iminosuccinate site; that span reads YVN. Residue Cys230 participates in [4Fe-4S] cluster binding. Iminosuccinate is bound by residues 256-258 and Thr273; that span reads HPE. Cys320 contributes to the [4Fe-4S] cluster binding site.

The protein belongs to the quinolinate synthase family. Type 3 subfamily. [4Fe-4S] cluster is required as a cofactor.

The protein localises to the cytoplasm. The catalysed reaction is iminosuccinate + dihydroxyacetone phosphate = quinolinate + phosphate + 2 H2O + H(+). The protein operates within cofactor biosynthesis; NAD(+) biosynthesis; quinolinate from iminoaspartate: step 1/1. Catalyzes the condensation of iminoaspartate with dihydroxyacetone phosphate to form quinolinate. This chain is Quinolinate synthase, found in Bacillus anthracis (strain A0248).